We begin with the raw amino-acid sequence, 219 residues long: Interleukin-6 (219 aa).

Residues 1–20 form the signal peptide; the sequence is MNSSTRYLSLLSALVVLVKG. Residues C103 and C111 are joined by a disulfide bond.

Belongs to the IL-6 superfamily. As to quaternary structure, component of a hexamer of two molecules each of IL6, IL6R and IL6ST; first binds to IL6R to associate with the signaling subunit IL6ST. As to expression, expressed in spleen, gill and gastrointestinal tract, ovary and brain. Highest expression in ovary.

It is found in the secreted. In terms of biological role, cytokine with a wide variety of biological functions in immunity, tissue regeneration, and metabolism. Binds to IL6R, then the complex associates to the signaling subunit IL6ST/gp130 to trigger the intracellular IL6-signaling pathway. The interaction with the membrane-bound IL6R and IL6ST stimulates 'classic signaling', whereas the binding of IL6 and soluble IL6R to IL6ST stimulates 'trans-signaling'. Alternatively, 'cluster signaling' occurs when membrane-bound IL6:IL6R complexes on transmitter cells activate IL6ST receptors on neighboring receiver cells. This chain is Interleukin-6 (il6), found in Oncorhynchus mykiss (Rainbow trout).